We begin with the raw amino-acid sequence, 322 residues long: Ubiquitin-conjugating enzyme E2 U (322 aa).

Residues 4 to 153 form the UBC core domain; the sequence is RAYLLLQRDF…LKLFNRPLQM (150 aa). Cys-89 functions as the Glycyl thioester intermediate in the catalytic mechanism.

The protein belongs to the ubiquitin-conjugating enzyme family. In terms of processing, autoubiquitinated in vitro in the presence of UBR5.

The catalysed reaction is S-ubiquitinyl-[E1 ubiquitin-activating enzyme]-L-cysteine + [E2 ubiquitin-conjugating enzyme]-L-cysteine = [E1 ubiquitin-activating enzyme]-L-cysteine + S-ubiquitinyl-[E2 ubiquitin-conjugating enzyme]-L-cysteine.. It participates in protein modification; protein ubiquitination. Its function is as follows. Catalyzes the covalent attachment of ubiquitin to other proteins. This is Ubiquitin-conjugating enzyme E2 U (UBE2U) from Macaca fascicularis (Crab-eating macaque).